A 278-amino-acid chain; its full sequence is DNA repair protein RecO (278 aa).

A compositionally biased stretch (polar residues) spans 1-12; that stretch reads MGTNDALTSTED. The interval 1-42 is disordered; that stretch reads MGTNDALTSTEDAVTAGANDAPLPAPPEPPRKARRATSRTSD.

It belongs to the RecO family.

Its function is as follows. Involved in DNA repair and RecF pathway recombination. This chain is DNA repair protein RecO, found in Burkholderia lata (strain ATCC 17760 / DSM 23089 / LMG 22485 / NCIMB 9086 / R18194 / 383).